A 219-amino-acid polypeptide reads, in one-letter code: Probable GTP-binding protein EngB (219 aa).

In terms of domain architecture, EngB-type G spans 31–205 (VGVEIAFAGR…LSILNEWCHP (175 aa)). GTP-binding positions include 39–46 (GRSNAGKS), 66–70 (GRTQL), 84–87 (DLPG), 151–154 (TKSD), and 184–186 (FSA). Residues Ser46 and Thr68 each coordinate Mg(2+).

It belongs to the TRAFAC class TrmE-Era-EngA-EngB-Septin-like GTPase superfamily. EngB GTPase family. The cofactor is Mg(2+).

In terms of biological role, necessary for normal cell division and for the maintenance of normal septation. The sequence is that of Probable GTP-binding protein EngB from Shewanella putrefaciens (strain CN-32 / ATCC BAA-453).